The sequence spans 440 residues: Xaa-Pro dipeptidase (440 aa).

Positions 244, 255, 336, 381, and 420 each coordinate Mn(2+).

Belongs to the peptidase M24B family. Requires Mn(2+) as cofactor. Post-translationally, the N-terminus is blocked.

The enzyme catalyses Xaa-L-Pro dipeptide + H2O = an L-alpha-amino acid + L-proline. It carries out the reaction diisopropyl fluorophosphate + H2O = diisopropyl phosphate + fluoride + 2 H(+). Functionally, splits dipeptides with a prolyl or hydroxyprolyl residue in the C-terminal position and a nonpolar amino acid at the N-terminal position. Also catalyzes the hydrolysis of toxic organophosphorus cholinesterase-inhibiting compounds including nerve gases such as diisopropylfluorophosphate (DFP), O-isopropyl methylphosphonofluoridate (sarin), O-pinacolyl methylphosphonofluoridate (soman), and O-cyclohexyl methylphosphonofluoridate. This is Xaa-Pro dipeptidase (pepQ) from Pseudoalteromonas haloplanktis (Alteromonas haloplanktis).